The following is an 890-amino-acid chain: Nitrate reductase [NADH] 2 (890 aa).

Residue Cys165 participates in Mo-molybdopterin binding. The region spanning 513-588 is the Cytochrome b5 heme-binding domain; that stretch reads SKMFSVSEVK…LEDYRIGELI (76 aa). Positions 548 and 571 each coordinate heme. The 113-residue stretch at 634–746 folds into the FAD-binding FR-type domain; that stretch reads RQKIPCKLVS…KGPLGHIEYT (113 aa). FAD-binding positions include 686–689, 703–707, Phe708, Phe715, 720–722, and Thr773; these read RAYT, LIKVY, and LMS.

Belongs to the nitrate reductase family. Homodimer. The cofactor is FAD. Heme serves as cofactor. It depends on Mo-molybdopterin as a cofactor.

The catalysed reaction is nitrite + NAD(+) + H2O = nitrate + NADH + H(+). Functionally, nitrate reductase is a key enzyme involved in the first step of nitrate assimilation in plants, fungi and bacteria. This chain is Nitrate reductase [NADH] 2 (NIA2), found in Phaseolus vulgaris (Kidney bean).